We begin with the raw amino-acid sequence, 700 residues long: Calpain-2 catalytic subunit (700 aa).

At alanine 2 the chain carries N-acetylalanine. Residues 2-19 (AGIAAKLAKDREAAEGLG) constitute a propeptide, anchors to the small subunit. One can recognise a Calpain catalytic domain in the interval 45–344 (LFQDPSFPAL…YSRLEICNLT (300 aa)). Residues glycine 91 and aspartate 96 each contribute to the Ca(2+) site. The active site involves cysteine 105. Ca(2+) contacts are provided by glutamate 175, glutamine 229, and lysine 230. Catalysis depends on residues histidine 262 and asparagine 286. Residues glutamate 292, aspartate 299, and glutamate 323 each contribute to the Ca(2+) site. Positions 345–514 (PDTLTSDSYK…KKADYQVVDD (170 aa)) are domain III. Residues 515–529 (EIEANIDEIDISEDD) are linker. A domain IV region spans residues 530-700 (IDDGFRRLFA…LISWLSFSVL (171 aa)). Ca(2+) is bound by residues alanine 542, aspartate 545, glutamate 547, glutamate 552, aspartate 585, aspartate 587, serine 589, lysine 591, glutamate 596, aspartate 615, aspartate 617, serine 619, threonine 621, glutamate 626, aspartate 658, and asparagine 661. 3 EF-hand domains span residues 572–597 (FSIETCKIMVDMLDSDGSGKLGLKEF), 602–637 (TKIQKYQKIYREIDVDRSGTMNSYEMRKALEEAGFK), and 652–672 (DDDLIIDFDNFVRCLIRLETL).

Belongs to the peptidase C2 family. As to quaternary structure, forms a heterodimer with a small (regulatory) subunit (CAPNS1). Interacts with CPEB3; this leads to cleavage of CPEB3. Requires Ca(2+) as cofactor. In terms of tissue distribution, ubiquitous.

Its subcellular location is the cytoplasm. The protein resides in the cell membrane. The enzyme catalyses Broad endopeptidase specificity.. Its activity is regulated as follows. Activated by 200-1000 micromolar concentrations of calcium and inhibited by calpastatin. Calcium-regulated non-lysosomal thiol-protease which catalyzes limited proteolysis of substrates involved in cytoskeletal remodeling and signal transduction. Proteolytically cleaves MYOC at 'Arg-226'. Proteolytically cleaves CPEB3 following neuronal stimulation which abolishes CPEB3 translational repressor activity, leading to translation of CPEB3 target mRNAs. This is Calpain-2 catalytic subunit (CAPN2) from Bos taurus (Bovine).